The chain runs to 276 residues: Expansin-A25 (276 aa).

The signal sequence occupies residues Met-1–Gly-27. The Expansin-like EG45 domain occupies Gln-73–Gly-183. One can recognise an Expansin-like CBD domain in the interval Tyr-193–Gly-272.

It belongs to the expansin family. Expansin A subfamily.

The protein resides in the secreted. The protein localises to the cell wall. Its subcellular location is the membrane. In terms of biological role, causes loosening and extension of plant cell walls by disrupting non-covalent bonding between cellulose microfibrils and matrix glucans. No enzymatic activity has been found. This Arabidopsis thaliana (Mouse-ear cress) protein is Expansin-A25 (EXPA25).